A 2837-amino-acid chain; its full sequence is Bifunctional DNA-directed RNA polymerase subunit beta-beta' (2837 aa).

Residues 1–1433 (MVDSSYMYAS…CLNVDLKQND (1433 aa)) form a DNA-directed RNA polymerase subunit beta region. The segment at 1436–2837 (IEDISHTNIA…ESVVAYDQSN (1402 aa)) is DNA-directed RNA polymerase subunit beta'. Cys1501, Cys1503, Cys1516, and Cys1519 together coordinate Zn(2+). Asp1893, Asp1895, and Asp1897 together coordinate Mg(2+). The Zn(2+) site is built by Cys2235, Cys2309, Cys2316, and Cys2319.

This sequence in the N-terminal section; belongs to the RNA polymerase beta chain family. The protein in the C-terminal section; belongs to the RNA polymerase beta' chain family. In terms of assembly, the RNAP catalytic core consists of 2 alpha, 1 beta/beta' and 1 omega subunit. When a sigma factor is associated with the core the holoenzyme is formed, which can initiate transcription. The cofactor is Mg(2+). Zn(2+) is required as a cofactor.

It catalyses the reaction RNA(n) + a ribonucleoside 5'-triphosphate = RNA(n+1) + diphosphate. Its function is as follows. DNA-dependent RNA polymerase catalyzes the transcription of DNA into RNA using the four ribonucleoside triphosphates as substrates. The polypeptide is Bifunctional DNA-directed RNA polymerase subunit beta-beta' (rpoBC) (Wolbachia pipientis wMel).